A 1226-amino-acid chain; its full sequence is Chitin synthase IV (1226 aa).

The disordered stretch occupies residues 1-205 (MSLPERPGGS…SRKNPATAEQ (205 aa)). Residues 49 to 65 (SVSSYAETISNPHANTE) show a composition bias toward polar residues. Residues 66-75 (TLPLSPTHPT) show a composition bias toward low complexity. Residues 94 to 107 (IRPERNRIDKDHRN) show a composition bias toward basic and acidic residues. A compositionally biased stretch (polar residues) spans 134–151 (DVSTEPSGGSQTHGSFAD). The segment covering 163–172 (MSGDDQEKGN) has biased composition (basic and acidic residues). Basic residues predominate over residues 173–198 (TRVKSRPRRSKSGKITKETRHRKSRK). The chain crosses the membrane as a helical span at residues 246–266 (MGLISIILVIMAIVGFLTFGF). Residues asparagine 381, asparagine 421, and asparagine 443 are each glycosylated (N-linked (GlcNAc...) asparagine). The chain crosses the membrane as a helical span at residues 516–536 (ILILSVVGTRFVLALIFQWFI). Residues 572-671 (LPGDVGSSAM…PGPAGFIHDS (100 aa)) are disordered. 2 stretches are compositionally biased toward polar residues: residues 580–601 (AMGS…TSRF) and 618–643 (TTMS…NDSR). Residue asparagine 640 is glycosylated (N-linked (GlcNAc...) asparagine). The segment covering 649 to 666 (PDPYSSAASPSDGPGPAG) has biased composition (low complexity). N-linked (GlcNAc...) asparagine glycosylation is found at asparagine 787 and asparagine 1035. The next 3 helical transmembrane spans lie at 1060 to 1080 (FVVF…AFTF), 1094 to 1114 (IIPL…ILVT), and 1118 to 1138 (WSYV…NFVL).

It belongs to the chitin synthase family. Class IV subfamily. As to expression, highly expressed in conidia.

It localises to the cell membrane. It carries out the reaction [(1-&gt;4)-N-acetyl-beta-D-glucosaminyl](n) + UDP-N-acetyl-alpha-D-glucosamine = [(1-&gt;4)-N-acetyl-beta-D-glucosaminyl](n+1) + UDP + H(+). In terms of biological role, polymerizes chitin, a structural polymer of the cell wall and septum, by transferring the sugar moiety of UDP-GlcNAc to the non-reducing end of the growing chitin polymer. Contributes to the production of conidia and the ability of fungal conidia to germinate. Involved in fungal stress tolerances. The protein is Chitin synthase IV of Metarhizium acridum (strain CQMa 102).